The following is a 491-amino-acid chain: Probable cytosol aminopeptidase (491 aa).

Residues Lys260 and Asp265 each contribute to the Mn(2+) site. Lys272 is an active-site residue. Mn(2+) is bound by residues Asp284, Asp343, and Glu345. Arg347 is a catalytic residue.

The protein belongs to the peptidase M17 family. The cofactor is Mn(2+).

It is found in the cytoplasm. The enzyme catalyses Release of an N-terminal amino acid, Xaa-|-Yaa-, in which Xaa is preferably Leu, but may be other amino acids including Pro although not Arg or Lys, and Yaa may be Pro. Amino acid amides and methyl esters are also readily hydrolyzed, but rates on arylamides are exceedingly low.. The catalysed reaction is Release of an N-terminal amino acid, preferentially leucine, but not glutamic or aspartic acids.. Presumably involved in the processing and regular turnover of intracellular proteins. Catalyzes the removal of unsubstituted N-terminal amino acids from various peptides. The protein is Probable cytosol aminopeptidase of Rippkaea orientalis (strain PCC 8801 / RF-1) (Cyanothece sp. (strain PCC 8801)).